The primary structure comprises 72 residues: Sperm protein associated with the nucleus on the X chromosome N1 (72 aa).

The interval 1 to 40 is disordered; sequence MEKPTSSTNGEKRKSPCDSNNKNDEMQETPNRDLVLEPSL. Basic and acidic residues predominate over residues 10-35; that stretch reads GEKRKSPCDSNNKNDEMQETPNRDLV.

Belongs to the SPAN-X family.

The sequence is that of Sperm protein associated with the nucleus on the X chromosome N1 (SPANXN1) from Gorilla gorilla gorilla (Western lowland gorilla).